Consider the following 120-residue polypeptide: NAD(P)H-quinone oxidoreductase subunit 3 (120 aa).

3 consecutive transmembrane segments (helical) span residues 10 to 30, 64 to 84, and 89 to 109; these read LLVF…ASAL, MFAL…PWAV, and LGLL…VGLV.

The protein belongs to the complex I subunit 3 family. NDH-1 can be composed of about 15 different subunits; different subcomplexes with different compositions have been identified which probably have different functions.

Its subcellular location is the cellular thylakoid membrane. The catalysed reaction is a plastoquinone + NADH + (n+1) H(+)(in) = a plastoquinol + NAD(+) + n H(+)(out). It catalyses the reaction a plastoquinone + NADPH + (n+1) H(+)(in) = a plastoquinol + NADP(+) + n H(+)(out). In terms of biological role, NDH-1 shuttles electrons from an unknown electron donor, via FMN and iron-sulfur (Fe-S) centers, to quinones in the respiratory and/or the photosynthetic chain. The immediate electron acceptor for the enzyme in this species is believed to be plastoquinone. Couples the redox reaction to proton translocation, and thus conserves the redox energy in a proton gradient. Cyanobacterial NDH-1 also plays a role in inorganic carbon-concentration. This is NAD(P)H-quinone oxidoreductase subunit 3 from Synechococcus sp. (strain JA-3-3Ab) (Cyanobacteria bacterium Yellowstone A-Prime).